Consider the following 369-residue polypeptide: Anhydro-N-acetylmuramic acid kinase (369 aa).

ATP is bound at residue 12 to 19 (GTSLDGVD).

It belongs to the anhydro-N-acetylmuramic acid kinase family.

It catalyses the reaction 1,6-anhydro-N-acetyl-beta-muramate + ATP + H2O = N-acetyl-D-muramate 6-phosphate + ADP + H(+). It functions in the pathway amino-sugar metabolism; 1,6-anhydro-N-acetylmuramate degradation. Its pathway is cell wall biogenesis; peptidoglycan recycling. Catalyzes the specific phosphorylation of 1,6-anhydro-N-acetylmuramic acid (anhMurNAc) with the simultaneous cleavage of the 1,6-anhydro ring, generating MurNAc-6-P. Is required for the utilization of anhMurNAc either imported from the medium or derived from its own cell wall murein, and thus plays a role in cell wall recycling. This is Anhydro-N-acetylmuramic acid kinase from Actinobacillus pleuropneumoniae serotype 3 (strain JL03).